The sequence spans 329 residues: Uroporphyrinogen decarboxylase (329 aa).

Substrate is bound by residues Arg22–Arg26, Asp71, Tyr140, Ser195, and His307.

This sequence belongs to the uroporphyrinogen decarboxylase family. As to quaternary structure, homodimer.

The protein localises to the cytoplasm. The catalysed reaction is uroporphyrinogen III + 4 H(+) = coproporphyrinogen III + 4 CO2. The protein operates within porphyrin-containing compound metabolism; protoporphyrin-IX biosynthesis; coproporphyrinogen-III from 5-aminolevulinate: step 4/4. In terms of biological role, catalyzes the decarboxylation of four acetate groups of uroporphyrinogen-III to yield coproporphyrinogen-III. The protein is Uroporphyrinogen decarboxylase of Chlamydia pneumoniae (Chlamydophila pneumoniae).